Here is a 165-residue protein sequence, read N- to C-terminus: Dihydrofolate reductase type A13 (165 aa).

The DHFR domain occupies 7-162; sequence RIYLVAAMGA…ITYTHSVYAR (156 aa).

Belongs to the dihydrofolate reductase family. As to quaternary structure, homodimer.

It carries out the reaction (6S)-5,6,7,8-tetrahydrofolate + NADP(+) = 7,8-dihydrofolate + NADPH + H(+). It functions in the pathway cofactor biosynthesis; tetrahydrofolate biosynthesis; 5,6,7,8-tetrahydrofolate from 7,8-dihydrofolate: step 1/1. Its function is as follows. Key enzyme in folate metabolism. Catalyzes an essential reaction for de novo glycine and purine synthesis, and for DNA precursor synthesis. The chain is Dihydrofolate reductase type A13 (dfrA13) from Escherichia coli.